Here is a 155-residue protein sequence, read N- to C-terminus: Ribosome maturation factor RimP (155 aa).

The protein belongs to the RimP family.

It is found in the cytoplasm. Its function is as follows. Required for maturation of 30S ribosomal subunits. The protein is Ribosome maturation factor RimP of Prochlorococcus marinus subsp. pastoris (strain CCMP1986 / NIES-2087 / MED4).